Here is a 264-residue protein sequence, read N- to C-terminus: Glutamate 5-kinase (264 aa).

Position 15 (K15) interacts with ATP. Substrate is bound by residues S55, D142, and N154. ATP-binding positions include S174–D175 and T216–K222.

The protein belongs to the glutamate 5-kinase family.

The protein localises to the cytoplasm. It catalyses the reaction L-glutamate + ATP = L-glutamyl 5-phosphate + ADP. The protein operates within amino-acid biosynthesis; L-proline biosynthesis; L-glutamate 5-semialdehyde from L-glutamate: step 1/2. In terms of biological role, catalyzes the transfer of a phosphate group to glutamate to form L-glutamate 5-phosphate. This Alkaliphilus metalliredigens (strain QYMF) protein is Glutamate 5-kinase.